The sequence spans 356 residues: Heat-inducible transcription repressor HrcA (356 aa).

Belongs to the HrcA family.

Functionally, negative regulator of class I heat shock genes (grpE-dnaK-dnaJ and groELS operons). Prevents heat-shock induction of these operons. This Gluconobacter oxydans (strain 621H) (Gluconobacter suboxydans) protein is Heat-inducible transcription repressor HrcA.